The following is a 335-amino-acid chain: Solute-binding protein Veis_3954 (335 aa).

Positions 1 to 34 (MPSTRPLPRPSSRSLRRLALGLGLAFGLGATAAA) are cleaved as a signal peptide. (R)-pantoate-binding positions include Gln-50, Glu-82, 155-158 (NGFR), Arg-179, and Asn-219.

Belongs to the bacterial solute-binding protein 7 family. The complex is comprised of an extracytoplasmic solute-binding protein and a heteromeric permease formed by two transmembrane proteins.

Its subcellular location is the periplasm. In terms of biological role, solute-binding protein that binds (R)-pantoate and D-erythronate (in vitro). Probably part of a tripartite ATP-independent periplasmic (TRAP) transport system that mediates solute transport into the cytoplasm. The chain is Solute-binding protein Veis_3954 from Verminephrobacter eiseniae (strain EF01-2).